A 1386-amino-acid chain; its full sequence is DNA-directed RNA polymerase subunit beta (1386 aa).

The protein belongs to the RNA polymerase beta chain family. In terms of assembly, in plastids the minimal PEP RNA polymerase catalytic core is composed of four subunits: alpha, beta, beta', and beta''. When a (nuclear-encoded) sigma factor is associated with the core the holoenzyme is formed, which can initiate transcription.

The protein resides in the plastid. The protein localises to the chloroplast. It carries out the reaction RNA(n) + a ribonucleoside 5'-triphosphate = RNA(n+1) + diphosphate. DNA-dependent RNA polymerase catalyzes the transcription of DNA into RNA using the four ribonucleoside triphosphates as substrates. The protein is DNA-directed RNA polymerase subunit beta of Thalassiosira pseudonana (Marine diatom).